The following is a 107-amino-acid chain: MQQVQLKLKSFDPVYINQLISLLNDVLDTLEIQNSKEIFLPSKIKKITVIRSPHIHKKSRDQFQIKRYKRSMIISFTNIDILHAFLEICKDLHVVGVQIHISVKYHS.

Belongs to the universal ribosomal protein uS10 family.

The protein localises to the mitochondrion. The sequence is that of Small ribosomal subunit protein uS10m (RPS10) from Prototheca wickerhamii.